The chain runs to 416 residues: Glutamyl-tRNA reductase (416 aa).

Substrate-binding positions include 49–52 (TCNR), S105, 110–112 (EPQ), and Q116. The active-site Nucleophile is C50. NADP(+) is bound at residue 185–190 (GAGETI).

This sequence belongs to the glutamyl-tRNA reductase family. In terms of assembly, homodimer.

It catalyses the reaction (S)-4-amino-5-oxopentanoate + tRNA(Glu) + NADP(+) = L-glutamyl-tRNA(Glu) + NADPH + H(+). It functions in the pathway porphyrin-containing compound metabolism; protoporphyrin-IX biosynthesis; 5-aminolevulinate from L-glutamyl-tRNA(Glu): step 1/2. Functionally, catalyzes the NADPH-dependent reduction of glutamyl-tRNA(Glu) to glutamate 1-semialdehyde (GSA). In Shewanella putrefaciens (strain CN-32 / ATCC BAA-453), this protein is Glutamyl-tRNA reductase.